We begin with the raw amino-acid sequence, 467 residues long: Zinc finger protein ZIC 3 (467 aa).

Residues 66–107 are disordered; that stretch reads LSSGQSSAFTPQGSGYANALGHHHHHHHHHHHTSQVPSYGGA. Positions 67–80 are enriched in polar residues; it reads SSGQSSAFTPQGSG. A compositionally biased stretch (basic residues) spans 86-98; that stretch reads GHHHHHHHHHHHT. Lysine 248 is covalently cross-linked (Glycyl lysine isopeptide (Lys-Gly) (interchain with G-Cter in SUMO2)). Residues 251-286 form a C2H2-type 1; atypical zinc finger; it reads LSCKWIDEAQLSRPKKSCDRTFSTMHELVTHVTMEH. The C2H2-type 2; atypical zinc-finger motif lies at 295 to 322; that stretch reads HVCYWEECPREGKSFKAKYKLVNHIRVH. Short sequence motifs (nuclear localization signal) lie at residues 297–322 and 330–352; these read CYWEECPREGKSFKAKYKLVNHIRVH and CPFPGCGKIFARSENLKIHKRTH. 3 C2H2-type zinc fingers span residues 328–352, 358–382, and 388–410; these read FPCPFPGCGKIFARSENLKIHKRTH, FKCEFEGCDRRFANSSDRKKHMHVH, and YICKVCDKSYTHPSSLRKHMKVH. The interval 404-467 is disordered; the sequence is RKHMKVHESQ…LPPNFNEWYV (64 aa). Residues 412–428 are compositionally biased toward low complexity; the sequence is SQGSDSSPAASSGYESS. Positions 435-455 are enriched in polar residues; sequence SANSKDTTKTPSAVQTSTSHN.

It belongs to the GLI C2H2-type zinc-finger protein family. Interacts (via the C2H2-type domains 3, 4 and 5) with MDFIC (via the C2H2-type domains 3, 4 and 5); the interaction reduces its transcriptional activity. Interacts with KPNA1 and KPNA6. Interacts (via C2H2-type domains 3, 4 and 5) with GLI3; the interaction enhances its transcriptional activity.

The protein localises to the nucleus. It is found in the cytoplasm. Its function is as follows. Acts as a transcriptional activator. Required in the earliest stages in both axial midline development and left-right (LR) asymmetry specification. Binds to the minimal GLI-consensus sequence 5'-GGGTGGTC-3'. This chain is Zinc finger protein ZIC 3 (ZIC3), found in Homo sapiens (Human).